The sequence spans 146 residues: MVMGPHLLLLVFILGLGLTPPTLAQNDSRYIKFLDQHYDPKTKNGNDKYCEKMMRLRNMISPCKEINTFIHGNKASIKAICGNQNGQPYNGNQRISTSAFQVTICRHIGGSPRPPCRYRATAGFRNIVIACENGLPVHLDESIFRP.

An N-terminal signal peptide occupies residues 1 to 24; that stretch reads MVMGPHLLLLVFILGLGLTPPTLA. Q25 is subject to Pyrrolidone carboxylic acid. H37 (proton acceptor) is an active-site residue. Cystine bridges form between C50–C105, C63–C116, and C81–C131. The Nucleolar localization signal signature appears at 55–59; the sequence is RLRNM. Positions 105 and 127 each coordinate tRNA. H138 (proton donor) is an active-site residue.

Belongs to the pancreatic ribonuclease family. Homodimer. Interacts with RNH1; inhibiting ANG ribonuclease activity. Interacts with PCNA.

The protein localises to the secreted. The protein resides in the nucleus. Its subcellular location is the nucleolus. It is found in the cytoplasm. It localises to the stress granule. Has weak tRNA ribonuclease activity by itself due to partial autoinhibition by its C-terminus, which folds into a short alpha-helix that partially occludes the substrate-binding site. In absence of stress, the ribonuclease activity is inhibited by RNH1 in the cytoplasm. In response to stress, dissociates from RNH1 in the cytoplasm and associates with cytoplasmic ribosomes with vacant A-sites: ribosomes directly activate the tRNA ribonuclease activity of ANG by refolding the C-terminal alpha-helix. In response to stress, the angiogenic activity of ANG is inhibited by RNH1 in the nucleus. Functionally, secreted ribonuclease that can either promote or restrict cell proliferation of target cells, depending on the context. Endocytosed in target cells via its receptor PLXNB2 and translocates to the cytoplasm or nucleus. Under stress conditions, localizes to the cytoplasm and promotes the assembly of stress granules (SGs): specifically cleaves a subset of tRNAs within anticodon loops to produce tRNA-derived stress-induced fragments (tiRNAs), resulting in translation repression and inhibition of cell proliferation. tiRNas also prevent formation of apoptosome, thereby promoting cell survival. Preferentially cleaves RNAs between a pyrimidine and an adenosine residue, suggesting that it cleaves the anticodon loop of tRNA(Ala) (32-UUAGCAU-38) after positions 33 and 36. Cleaves a subset of tRNAs, including tRNA(Ala), tRNA(Glu), tRNA(Gly), tRNA(Lys), tRNA(Val), tRNA(His), tRNA(Asp) and tRNA(Sec). Under growth conditions and in differentiated cells, translocates to the nucleus and stimulates ribosomal RNA (rRNA) transcription, including that containing the initiation site sequences of 45S rRNA, thereby promoting cell growth and proliferation. Angiogenin induces vascularization of normal and malignant tissues via its ability to promote rRNA transcription. Involved in hematopoietic stem and progenitor cell (HSPC) growth and survival by promoting rRNA transcription in growth conditions and inhibiting translation in response to stress, respectively. Mediates the crosstalk between myeloid and intestinal epithelial cells to protect the intestinal epithelial barrier integrity: secreted by myeloid cells and promotes intestinal epithelial cells proliferation and survival. Also mediates osteoclast-endothelial cell crosstalk in growing bone: produced by osteoclasts and protects the neighboring vascular cells against senescence by promoting rRNA transcription. The sequence is that of Angiogenin (ANG) from Saimiri sciureus (Common squirrel monkey).